A 422-amino-acid polypeptide reads, in one-letter code: Adenylosuccinate synthetase (422 aa).

Residues glycine 11 to lysine 17 and glycine 39 to threonine 41 contribute to the GTP site. Aspartate 12 serves as the catalytic Proton acceptor. Residues aspartate 12 and glycine 39 each coordinate Mg(2+). Residues aspartate 12–lysine 15, asparagine 37–histidine 40, threonine 129, arginine 143, asparagine 219, threonine 234, and arginine 298 each bind IMP. Residue histidine 40 is the Proton donor of the active site. Residue valine 294–arginine 300 participates in substrate binding. GTP is bound by residues arginine 300, lysine 326–aspartate 328, and glycine 411–glycine 413.

This sequence belongs to the adenylosuccinate synthetase family. As to quaternary structure, homodimer. Requires Mg(2+) as cofactor.

It is found in the cytoplasm. It carries out the reaction IMP + L-aspartate + GTP = N(6)-(1,2-dicarboxyethyl)-AMP + GDP + phosphate + 2 H(+). Its pathway is purine metabolism; AMP biosynthesis via de novo pathway; AMP from IMP: step 1/2. Its function is as follows. Plays an important role in the de novo pathway and in the salvage pathway of purine nucleotide biosynthesis. Catalyzes the first committed step in the biosynthesis of AMP from IMP. This chain is Adenylosuccinate synthetase, found in Talaromyces stipitatus (strain ATCC 10500 / CBS 375.48 / QM 6759 / NRRL 1006) (Penicillium stipitatum).